Here is a 66-residue protein sequence, read N- to C-terminus: DNA gyrase inhibitor YacG (66 aa).

The Zn(2+) site is built by Cys9, Cys12, Cys28, and Cys32. Residues His45 to His66 are disordered.

The protein belongs to the DNA gyrase inhibitor YacG family. In terms of assembly, interacts with GyrB. Zn(2+) is required as a cofactor.

In terms of biological role, inhibits all the catalytic activities of DNA gyrase by preventing its interaction with DNA. Acts by binding directly to the C-terminal domain of GyrB, which probably disrupts DNA binding by the gyrase. In Pseudomonas entomophila (strain L48), this protein is DNA gyrase inhibitor YacG.